Here is a 185-residue protein sequence, read N- to C-terminus: Peptidyl-tRNA hydrolase (185 aa).

Tyrosine 14 contacts tRNA. The active-site Proton acceptor is the histidine 19. Tyrosine 65, asparagine 67, and asparagine 113 together coordinate tRNA.

It belongs to the PTH family. As to quaternary structure, monomer.

The protein localises to the cytoplasm. It carries out the reaction an N-acyl-L-alpha-aminoacyl-tRNA + H2O = an N-acyl-L-amino acid + a tRNA + H(+). In terms of biological role, hydrolyzes ribosome-free peptidyl-tRNAs (with 1 or more amino acids incorporated), which drop off the ribosome during protein synthesis, or as a result of ribosome stalling. Functionally, catalyzes the release of premature peptidyl moieties from peptidyl-tRNA molecules trapped in stalled 50S ribosomal subunits, and thus maintains levels of free tRNAs and 50S ribosomes. This chain is Peptidyl-tRNA hydrolase, found in Rickettsia africae (strain ESF-5).